The following is a 37-amino-acid chain: Large ribosomal subunit protein bL36 (37 aa).

The protein belongs to the bacterial ribosomal protein bL36 family.

This is Large ribosomal subunit protein bL36 from Thermomicrobium roseum (strain ATCC 27502 / DSM 5159 / P-2).